Consider the following 241-residue polypeptide: Protein GrpE (241 aa).

Basic and acidic residues predominate over residues 28 to 49 (QNCQKEETQTTNKDNQKEDETF). A disordered region spans residues 28–78 (QNCQKEETQTTNKDNQKEDETFKNQPNKTKQTNTKQQKHLSKESSHQQITK). Positions 50 to 62 (KNQPNKTKQTNTK) are enriched in low complexity.

Belongs to the GrpE family. In terms of assembly, homodimer.

The protein resides in the cytoplasm. Participates actively in the response to hyperosmotic and heat shock by preventing the aggregation of stress-denatured proteins, in association with DnaK and GrpE. It is the nucleotide exchange factor for DnaK and may function as a thermosensor. Unfolded proteins bind initially to DnaJ; upon interaction with the DnaJ-bound protein, DnaK hydrolyzes its bound ATP, resulting in the formation of a stable complex. GrpE releases ADP from DnaK; ATP binding to DnaK triggers the release of the substrate protein, thus completing the reaction cycle. Several rounds of ATP-dependent interactions between DnaJ, DnaK and GrpE are required for fully efficient folding. This Aster yellows witches'-broom phytoplasma (strain AYWB) protein is Protein GrpE.